The primary structure comprises 764 residues: Polymeric immunoglobulin receptor (764 aa).

The N-terminal stretch at 1-18 (MLLFVLTCLLAVFPAIST) is a signal peptide. Positions 19 to 120 (KSPIFGPEEV…GLGINSRGLS (102 aa)) constitute an Ig-like V-type 1; required for binding to polymeric IgA and IgM domain. Over 19-638 (KSPIFGPEEV…SSEEQGGSSR (620 aa)) the chain is Extracellular. Disulfide bonds link Cys-40–Cys-110 and Cys-56–Cys-64. Asn-83, Asn-90, Asn-135, and Asn-186 each carry an N-linked (GlcNAc...) asparagine glycan. 4 consecutive Ig-like V-type domains span residues 145–237 (GRTV…DLQV), 250–352 (RGSV…ESTI), 364–458 (GGSV…IKII), and 462–561 (PNLK…VYVA). Disulfide bonds link Cys-152-Cys-220, Cys-257-Cys-325, Cys-271-Cys-279, Cys-371-Cys-441, and Cys-385-Cys-395. N-linked (GlcNAc...) asparagine glycosylation is present at Asn-421. Residue Asn-469 is glycosylated (N-linked (GlcNAc...) (complex) asparagine). 3 cysteine pairs are disulfide-bonded: Cys-482–Cys-544, Cys-486–Cys-520, and Cys-496–Cys-503. Residue Asn-499 is glycosylated (N-linked (GlcNAc...) asparagine). Basic and acidic residues predominate over residues 609 to 619 (KAVADTRDQAD). The tract at residues 609 to 637 (KAVADTRDQADGSRASVDSGSSEEQGGSS) is disordered. Low complexity predominate over residues 627–637 (SGSSEEQGGSS). Residues 639 to 661 (ALVSTLVPLGLVLAVGAVAVGVA) traverse the membrane as a helical segment. Residues 662–764 (RARHRKNVDR…AEAQDGPQEA (103 aa)) lie on the Cytoplasmic side of the membrane. Phosphoserine occurs at positions 673, 682, 689, and 735. A disordered region spans residues 717 to 738 (ATTESTTETKEPKKAKRSSKEE). The segment covering 723-738 (TETKEPKKAKRSSKEE) has biased composition (basic and acidic residues).

Interacts (mainly via CDR1-like domain) with dimeric IgA. Interacts (mainly via CDR2-like domain) with pentameric IgM. In terms of assembly, either free or part of the secretory IgA (sIgA) complex that consists of two, four or five IgA monomers, and two additional non-Ig polypeptides, namely the JCHAIN and the secretory component (the proteolytic product of PIGR). Free secretory component interacts with bacterial antigens toxA of C.difficile and eaeA of E.coli. N-glycosylated. N-glycosylation is required for anchoring IgA molecules to mucus, but is not necessary for Ig binding.

It localises to the cell membrane. The protein localises to the secreted. Its function is as follows. Mediates selective transcytosis of polymeric IgA and IgM across mucosal epithelial cells. Binds polymeric IgA and IgM at the basolateral surface of epithelial cells. The complex is then transported across the cell to be secreted at the apical surface. During this process, a cleavage occurs that separates the extracellular (known as the secretory component) from the transmembrane segment. In terms of biological role, through its N-linked glycans ensures anchoring of secretory IgA (sIgA) molecules to mucus lining the epithelial surface to neutralize extracellular pathogens. On its own (free form) may act as a non-specific microbial scavenger to prevent pathogen interaction with epithelial cells. The chain is Polymeric immunoglobulin receptor (PIGR) from Homo sapiens (Human).